Consider the following 197-residue polypeptide: Ras-like protein rasB (197 aa).

13–20 (GGGGVGKS) is a GTP binding site. Residues 35–43 (YDPTIEDSY) carry the Effector region motif. GTP is bound by residues 60–64 (DTAGQ) and 119–122 (NKCD). At Cys-194 the chain carries Cysteine methyl ester. Cys-194 carries the S-geranylgeranyl cysteine lipid modification. The propeptide at 195–197 (LIL) is removed in mature form.

This sequence belongs to the small GTPase superfamily. Ras family.

It is found in the cell membrane. The enzyme catalyses GTP + H2O = GDP + phosphate + H(+). Alternates between an inactive form bound to GDP and an active form bound to GTP. Activated by a guanine nucleotide-exchange factor (GEF) and inactivated by a GTPase-activating protein (GAP). In terms of biological role, ras proteins bind GDP/GTP and possess intrinsic GTPase activity. The polypeptide is Ras-like protein rasB (rasB) (Dictyostelium discoideum (Social amoeba)).